The chain runs to 116 residues: MIQVYKYDENFMFVEPLVVTEIDEKGDYIFPDNCTSVPLPDSPSYYLPRFDLSKQVWIETASQEYIDSLSPPPEEPSDVELLGQSLAEARILILKQNRIILNLQNEVKNLKDGTTA.

The chain is SPbeta prophage-derived uncharacterized protein YomQ (yomQ) from Bacillus subtilis (strain 168).